We begin with the raw amino-acid sequence, 460 residues long: Lipase member H-A (460 aa).

The first 26 residues, 1–26, serve as a signal peptide directing secretion; the sequence is MLLSFYFNGLLLVGCLLSWGRSDTEG. N-linked (GlcNAc...) asparagine glycans are attached at residues N67 and N75. S163 acts as the Nucleophile in catalysis. N177 carries N-linked (GlcNAc...) asparagine glycosylation. D187 functions as the Charge relay system in the catalytic mechanism. C242 and C255 are joined by a disulfide. H257 functions as the Charge relay system in the catalytic mechanism. Disulfide bonds link C279-C290 and C293-C301. The N-linked (GlcNAc...) asparagine glycan is linked to N289. A glycan (N-linked (GlcNAc...) asparagine) is linked at N366. C436 and C455 are disulfide-bonded.

Belongs to the AB hydrolase superfamily. Lipase family.

Its subcellular location is the secreted. It is found in the cell membrane. It carries out the reaction 1-hexadecanoyl-2-(9Z-octadecenoyl)-sn-glycero-3-phosphate + H2O = 2-(9Z-octadecenoyl)-sn-glycero-3-phosphate + hexadecanoate + H(+). Hydrolyzes specifically phosphatidic acid (PA) to produce 2-acyl lysophosphatidic acid (LPA; a potent bioactive lipid mediator) and fatty acid. Does not hydrolyze other phospholipids, like phosphatidylserine (PS), phosphatidylcholine (PC) and phosphatidylethanolamine (PE) or triacylglycerol (TG). This chain is Lipase member H-A (liph-a), found in Xenopus laevis (African clawed frog).